The following is a 386-amino-acid chain: Lysophosphatidylserine lipase ABHD12 (386 aa).

Residues 1 to 66 (MRKRAEPVPP…YGLWSRLRMF (66 aa)) lie on the Cytoplasmic side of the membrane. The helical transmembrane segment at 67-87 (LIFLLGLYIAIPFLVKICPAI) threads the bilayer. Over 88-386 (QTQLVFLNLV…RDFLGNTEQQ (299 aa)) the chain is Extracellular. A glycan (N-linked (GlcNAc...) asparagine) is linked at N114. S237 functions as the Nucleophile in the catalytic mechanism. Catalysis depends on charge relay system residues D324 and H363.

This sequence belongs to the serine esterase family.

It localises to the endoplasmic reticulum membrane. The enzyme catalyses 1-(9Z-octadecenoyl)-sn-glycero-3-phospho-L-serine + H2O = sn-glycero-3-phospho-L-serine + (9Z)-octadecenoate + H(+). It catalyses the reaction 1-(9Z-octadecenoyl)-sn-glycero-3-phospho-(1'-sn-glycerol) + H2O = sn-glycero-3-phospho-(1'-sn-glycerol) + (9Z)-octadecenoate + H(+). It carries out the reaction 1-(9Z-octadecenoyl)-sn-glycero-3-phospho-(1D-myo-inositol) + H2O = sn-glycero-3-phospho-1D-myo-inositol + (9Z)-octadecenoate + H(+). The catalysed reaction is 1-(9Z-octadecenoyl)-sn-glycero-3-phosphoethanolamine + H2O = sn-glycero-3-phosphoethanolamine + (9Z)-octadecenoate + H(+). The enzyme catalyses 1-(9Z-octadecenoyl)-sn-glycero-3-phosphocholine + H2O = 1-(9Z-octadecenoyl)-sn-glycerol + phosphocholine + H(+). It catalyses the reaction 2-(9Z-octadecenoyl)-glycerol + H2O = glycerol + (9Z)-octadecenoate + H(+). It carries out the reaction 1-hexadecanoyl-sn-glycero-3-phospho-L-serine + H2O = sn-glycero-3-phospho-L-serine + hexadecanoate + H(+). The catalysed reaction is 2-(5Z,8Z,11Z,14Z-eicosatetraenoyl)-glycerol + H2O = glycerol + (5Z,8Z,11Z,14Z)-eicosatetraenoate + H(+). The enzyme catalyses Hydrolyzes glycerol monoesters of long-chain fatty acids.. It catalyses the reaction 1-decanoylglycerol + H2O = decanoate + glycerol + H(+). It carries out the reaction 1-dodecanoylglycerol + H2O = dodecanoate + glycerol + H(+). The catalysed reaction is 1-tetradecanoylglycerol + H2O = tetradecanoate + glycerol + H(+). The enzyme catalyses 2-hexadecanoylglycerol + H2O = glycerol + hexadecanoate + H(+). It catalyses the reaction 1-(9Z-octadecenoyl)-glycerol + H2O = glycerol + (9Z)-octadecenoate + H(+). It carries out the reaction 2-(9Z,12Z-octadecadienoyl)-glycerol + H2O = (9Z,12Z)-octadecadienoate + glycerol + H(+). The catalysed reaction is 1-(5Z,8Z,11Z,14Z-eicosatetraenoyl)-glycerol + H2O = glycerol + (5Z,8Z,11Z,14Z)-eicosatetraenoate + H(+). The enzyme catalyses 1-(9Z,12Z-octadecadienoyl)-glycerol + H2O = (9Z,12Z)-octadecadienoate + glycerol + H(+). It catalyses the reaction 1-hexadecanoylglycerol + H2O = glycerol + hexadecanoate + H(+). It carries out the reaction 1-octadecanoylglycerol + H2O = octadecanoate + glycerol + H(+). The catalysed reaction is 1-octadecanoyl-2-(9,10-epoxyoctadecanoyl)-sn-glycero-3-phospho-L-serine + H2O = 9,10-epoxyoctadecanoate + 1-octadecanoyl-sn-glycero-3-phosphoserine + H(+). The enzyme catalyses 1-octadecanoyl-2-(10-hydroxyoctadecanoyl)-sn-glycero-3-phospho-L-serine + H2O = 1-octadecanoyl-sn-glycero-3-phosphoserine + 10-hydroxyoctadecanoate + H(+). It catalyses the reaction 1-hexadecanoyl-2-(10-hydroxyoctadecanoyl)-sn-glycero-3-phospho-L-serine + H2O = 10-hydroxyoctadecanoate + 1-hexadecanoyl-sn-glycero-3-phospho-L-serine + H(+). In terms of biological role, lysophosphatidylserine (LPS) lipase that mediates the hydrolysis of lysophosphatidylserine, a class of signaling lipids that regulates immunological and neurological processes. Represents a major lysophosphatidylserine lipase in the brain, thereby playing a key role in the central nervous system. Also able to hydrolyze oxidized phosphatidylserine; oxidized phosphatidylserine is produced in response to severe inflammatory stress and constitutes a proapoptotic 'eat me' signal. Also has monoacylglycerol (MAG) lipase activity: hydrolyzes 2-arachidonoylglycerol (2-AG), thereby acting as a regulator of endocannabinoid signaling pathways. Has a strong preference for very-long-chain lipid substrates; substrate specificity is likely due to improved catalysis and not improved substrate binding. The sequence is that of Lysophosphatidylserine lipase ABHD12 from Xenopus tropicalis (Western clawed frog).